The following is a 1097-amino-acid chain: MSSTKLSTSILPDLVEIQRASFCWFLEEGLAEEIKSFSPITDYTGNLELHFFGDQFKLKCPKYNLLESKRRDATYSVQVYVPARLINRDTGIIKEQEVFIGDLPLMTDRGTFIINGAERVIVNQIVRSPGIYYKSETDRQGRRTYSGSLISNRGAWVKFETDRNDLVWVRIDKTRKIPAHVFLKAMGLSDSDIYNGLRHPEYLKKSFRVEGNYTTEEALIQMYTKLRPGEPATVNGGQQILYSRFFDPKRYDLGKVGRYKINKKLALSIPENIKVLTPQDTLSAIDYLINLKFNIGETDDIDHLGNRRVRSVGELLQNQVRVGLNRLERIIRERMTICDSESLAPNTLVNPKPIIAAIREFFGSSQLSQFMDQTNPLAELTHKRRISALGPGGLNRDRAGFAVRDIHPSHYGRICPIETPEGPNAGLIGVLATHARINSYGFIETPFYQVINGKVVSDGNPVYLTADQEDNFRIAPGDIAIDENNAINNDIVPVRYRQEFTITKPEQIDYIQVSPIQVISIATSLIPFLEHDDANRALMGSNMQRQAVPLLYPESPLIGTGIEAQAARDSGMVVVSYQDGRVTYVSANKICITDDEGKEVVYYLQKYQRSNQDTCINQRPSVWLGEKVVAGQVIADGAATEGGELALGQNILIAYLPWEGYNYEDAFLISERLVYNDVYTSVHIEKYEIEARQTKLGSEEITRELPNIGEYSLRKLDDNGIIVIGSWVEVGDILVGKVTPKGESDQPPEGKLLRAIFGEKARDVRDTSLRVPNGGRGRVLDVRIFTREKGDELPTGANIVIRVYVAQTRKIQVGDKMAGRHGNKGIISRILPRQDMPYLPDGTPVDLVLNPLGVPSRMNVGQIFECLLGLAAENLDKRFKIIPFDEMNGAEASRVLVNEKLMEARTLTEKDWIFDLRHPGKTQLFDGRTGEAFDNPVTVGISYMLKLVHLVDDKIHARSTGPYSLVTQQPLGGKAQHGGQRLGEMEVWALEAFGASYTLQELLTVKSDDMQGRNETLNAIVKGKPIPRPGTPESFKVLMRELQSLGLDIGAYKIENLPDGQTRGIEVDLMSNLHNRRVPSRPTYESITREDLENSFA.

It belongs to the RNA polymerase beta chain family. In terms of assembly, in plastids the minimal PEP RNA polymerase catalytic core is composed of four subunits: alpha, beta, beta', and beta''. When a (nuclear-encoded) sigma factor is associated with the core the holoenzyme is formed, which can initiate transcription.

It localises to the plastid. The protein localises to the chloroplast. It carries out the reaction RNA(n) + a ribonucleoside 5'-triphosphate = RNA(n+1) + diphosphate. In terms of biological role, DNA-dependent RNA polymerase catalyzes the transcription of DNA into RNA using the four ribonucleoside triphosphates as substrates. This Rhodomonas salina (Cryptomonas salina) protein is DNA-directed RNA polymerase subunit beta.